The following is a 307-amino-acid chain: Nicotinamide/nicotinic acid mononucleotide adenylyltransferase 2 (307 aa).

2 residues coordinate NAD(+): Ser16 and Phe17. An ATP-binding site is contributed by His24. NAD(+) is bound by residues Trp92 and Thr95. S-palmitoyl cysteine attachment occurs at residues Cys164 and Cys165. Residues Gly200, Asp202, Leu212, Trp213, and Arg232 each coordinate NAD(+). 271-274 (TKSR) is an ATP binding site.

The protein belongs to the eukaryotic NMN adenylyltransferase family. Monomer. Mg(2+) is required as a cofactor. Post-translationally, degraded in response to injured neurite. Degradation is caused by polyubiquitination by MYCBP2 after recognition by FBXO45. In terms of processing, palmitoylated; palmitoylation is required for membrane association. Expressed predominantly in the brain and nervous system.

Its subcellular location is the golgi apparatus membrane. The protein localises to the cytoplasmic vesicle membrane. The protein resides in the cytoplasm. It localises to the cell projection. It is found in the axon. The catalysed reaction is beta-nicotinamide D-ribonucleotide + ATP + H(+) = diphosphate + NAD(+). It catalyses the reaction nicotinate beta-D-ribonucleotide + ATP + H(+) = deamido-NAD(+) + diphosphate. The protein operates within cofactor biosynthesis; NAD(+) biosynthesis; NAD(+) from nicotinamide D-ribonucleotide: step 1/1. It participates in cofactor biosynthesis; NAD(+) biosynthesis; deamido-NAD(+) from nicotinate D-ribonucleotide: step 1/1. Its activity is regulated as follows. Inhibited by P1-(adenosine-5')-P3-(nicotinamide-riboside-5')-triphosphate (Np3AD) and P1-(adenosine-5')-P4-(nicotinamide-riboside-5')-tetraphosphate (Np4AD). Nicotinamide/nicotinate-nucleotide adenylyltransferase that acts as an axon maintenance factor. Axon survival factor required for the maintenance of healthy axons: acts by delaying Wallerian axon degeneration, an evolutionarily conserved process that drives the loss of damaged axons. Catalyzes the formation of NAD(+) from nicotinamide mononucleotide (NMN) and ATP. Can also use the deamidated form; nicotinic acid mononucleotide (NaMN) as substrate but with a lower efficiency. Cannot use triazofurin monophosphate (TrMP) as substrate. Also catalyzes the reverse reaction, i.e. the pyrophosphorolytic cleavage of NAD(+). For the pyrophosphorolytic activity prefers NAD(+), NADH and NaAD as substrates and degrades nicotinic acid adenine dinucleotide phosphate (NHD) less effectively. Fails to cleave phosphorylated dinucleotides NADP(+), NADPH and NaADP(+). Also acts as an activator of ADP-ribosylation by supporting the catalytic activity of PARP16 and promoting mono-ADP-ribosylation of ribosomes by PARP16. May be involved in the maintenance of axonal integrity. The protein is Nicotinamide/nicotinic acid mononucleotide adenylyltransferase 2 of Mus musculus (Mouse).